The primary structure comprises 275 residues: 2,3,4,5-tetrahydropyridine-2,6-dicarboxylate N-succinyltransferase (275 aa).

Belongs to the transferase hexapeptide repeat family.

It is found in the cytoplasm. The catalysed reaction is (S)-2,3,4,5-tetrahydrodipicolinate + succinyl-CoA + H2O = (S)-2-succinylamino-6-oxoheptanedioate + CoA. It participates in amino-acid biosynthesis; L-lysine biosynthesis via DAP pathway; LL-2,6-diaminopimelate from (S)-tetrahydrodipicolinate (succinylase route): step 1/3. The protein is 2,3,4,5-tetrahydropyridine-2,6-dicarboxylate N-succinyltransferase of Burkholderia multivorans (strain ATCC 17616 / 249).